The primary structure comprises 597 residues: MKNIRNFSIIAHIDHGKSTLADRFIQYCGGLEMREMSEQVLDSMDIEKERGITIKAQTAALSYKARDGQVYHLNLIDTPGHVDFSYEVSRSLSACEGALLVVDASQGVEAQTVANCYTAIELGVEVVPVLNKIDLPAAEPERVSQEIEDIIGIEAIDAVRASAKSGIGIEDILETVVQKIPAPKGDADAPLKALIIDSWFDNYVGVVMLVRLVDGAVKPKDKIKFMATGAEHLVEQVGVFTPKSVQRSELRAGEVGFIIAGIKELKSAKVGDTITQVARPAAEALPGFKEVQSQVFAGLYPVESHDYDNLRDALEKLQLNDASLKFEPEVSQALGFGFRCGFLGLLHLEIVQERLEREFDMDLITTAPTVVYELLLKDGTVIEVENPSKLPDPSKIEEIREPIITSTILVPQDYVGAVMTLCNQKRGVQVNMQYMGRQVMLTYDLPMNEVVMDFFDKLKSTSRGYASLDYEFKCFQASDLVKLDVMVNGEKVDALSLIVHRQNAIYRGRELVSKMRELIPRQMFDIAVQAAIGNNIIARETVKALRKNVLAKCYGGDITRKKKLLEKQKAGKRRMKQVGNVEIPQEAFLAILQVSDK.

Residues 2–184 form the tr-type G domain; it reads KNIRNFSIIA…TVVQKIPAPK (183 aa). GTP-binding positions include 14-19 and 131-134; these read DHGKST and NKID.

This sequence belongs to the TRAFAC class translation factor GTPase superfamily. Classic translation factor GTPase family. LepA subfamily.

The protein localises to the cell inner membrane. It catalyses the reaction GTP + H2O = GDP + phosphate + H(+). Its function is as follows. Required for accurate and efficient protein synthesis under certain stress conditions. May act as a fidelity factor of the translation reaction, by catalyzing a one-codon backward translocation of tRNAs on improperly translocated ribosomes. Back-translocation proceeds from a post-translocation (POST) complex to a pre-translocation (PRE) complex, thus giving elongation factor G a second chance to translocate the tRNAs correctly. Binds to ribosomes in a GTP-dependent manner. The sequence is that of Elongation factor 4 from Laribacter hongkongensis (strain HLHK9).